The chain runs to 306 residues: MTDKIAVLLGGTSAEREVSLNSGAAVLAGLREGGIDAYPVDPKEVDVTQLKSMGFQKVFIALHGRGGEDGTLQGMLELMGLPYTGSGVMASALSIDKLRSKLLWQGAGLPVAPWVALTRAEFEKGLSDKQLAEISALGLPVIVKPSREGSSVGMSKVVAENALQDALRLAFQHDEEVLIEKWLSGPEFTVAILGEEILPSIRIQPSGTFYDYEAKYLSDETQYFCPAGLEASQEANLQALVLKAWTTLGCKGWGRIDVMLDSDGQFYLLEANTSPGMTSHSLVPMAARQAGMSFSQLVVRILELAD.

An ATP-grasp domain is found at 101-303 (KLLWQGAGLP…FSQLVVRILE (203 aa)). Residue 134 to 189 (ISALGLPVIVKPSREGSSVGMSKVVAENALQDALRLAFQHDEEVLIEKWLSGPEFT) coordinates ATP. The Mg(2+) site is built by aspartate 257, glutamate 270, and asparagine 272.

The protein belongs to the D-alanine--D-alanine ligase family. Mg(2+) is required as a cofactor. Mn(2+) serves as cofactor.

The protein resides in the cytoplasm. The catalysed reaction is 2 D-alanine + ATP = D-alanyl-D-alanine + ADP + phosphate + H(+). It participates in cell wall biogenesis; peptidoglycan biosynthesis. Its function is as follows. Cell wall formation. In Shigella flexneri, this protein is D-alanine--D-alanine ligase B.